The chain runs to 236 residues: uncharacterized protein (236 aa).

The N-terminal stretch at 1–23 is a signal peptide; it reads MRRILSILVFAIMLAGCSSNAST. Positions 22 to 62 are disordered; sequence STEKQHAGGEKTVKAEPQSTSSQKDSTDDYQPNSQVTDDRT. Basic and acidic residues predominate over residues 24 to 35; the sequence is EKQHAGGEKTVK.

This is an uncharacterized protein from Bacillus subtilis (strain 168).